We begin with the raw amino-acid sequence, 412 residues long: NADH-quinone oxidoreductase subunit D (412 aa).

Belongs to the complex I 49 kDa subunit family. In terms of assembly, NDH-1 is composed of 14 different subunits. Subunits NuoB, C, D, E, F, and G constitute the peripheral sector of the complex.

It is found in the cell inner membrane. The enzyme catalyses a quinone + NADH + 5 H(+)(in) = a quinol + NAD(+) + 4 H(+)(out). Functionally, NDH-1 shuttles electrons from NADH, via FMN and iron-sulfur (Fe-S) centers, to quinones in the respiratory chain. The immediate electron acceptor for the enzyme in this species is believed to be ubiquinone. Couples the redox reaction to proton translocation (for every two electrons transferred, four hydrogen ions are translocated across the cytoplasmic membrane), and thus conserves the redox energy in a proton gradient. The protein is NADH-quinone oxidoreductase subunit D of Sulfurimonas denitrificans (strain ATCC 33889 / DSM 1251) (Thiomicrospira denitrificans (strain ATCC 33889 / DSM 1251)).